A 232-amino-acid chain; its full sequence is Phosphatidylserine decarboxylase proenzyme (232 aa).

The active-site Schiff-base intermediate with substrate; via pyruvic acid is S190. At S190 the chain carries Pyruvic acid (Ser); by autocatalysis.

The protein belongs to the phosphatidylserine decarboxylase family. PSD-A subfamily. In terms of assembly, heterodimer of a large membrane-associated beta subunit and a small pyruvoyl-containing alpha subunit. It depends on pyruvate as a cofactor. Is synthesized initially as an inactive proenzyme. Formation of the active enzyme involves a self-maturation process in which the active site pyruvoyl group is generated from an internal serine residue via an autocatalytic post-translational modification. Two non-identical subunits are generated from the proenzyme in this reaction, and the pyruvate is formed at the N-terminus of the alpha chain, which is derived from the carboxyl end of the proenzyme. The post-translation cleavage follows an unusual pathway, termed non-hydrolytic serinolysis, in which the side chain hydroxyl group of the serine supplies its oxygen atom to form the C-terminus of the beta chain, while the remainder of the serine residue undergoes an oxidative deamination to produce ammonia and the pyruvoyl prosthetic group on the alpha chain.

The protein resides in the cell membrane. It carries out the reaction a 1,2-diacyl-sn-glycero-3-phospho-L-serine + H(+) = a 1,2-diacyl-sn-glycero-3-phosphoethanolamine + CO2. The protein operates within phospholipid metabolism; phosphatidylethanolamine biosynthesis; phosphatidylethanolamine from CDP-diacylglycerol: step 2/2. Catalyzes the formation of phosphatidylethanolamine (PtdEtn) from phosphatidylserine (PtdSer). The sequence is that of Phosphatidylserine decarboxylase proenzyme from Rhizobium johnstonii (strain DSM 114642 / LMG 32736 / 3841) (Rhizobium leguminosarum bv. viciae).